The chain runs to 452 residues: tRNA modification GTPase MnmE (452 aa).

R24, E81, and K120 together coordinate (6S)-5-formyl-5,6,7,8-tetrahydrofolate. A TrmE-type G domain is found at 217-373 (GIKTAIVGKT…LIMKIEQMHI (157 aa)). A K(+)-binding site is contributed by N227. Residues 227-232 (NVGKSS), 246-252 (TDIHGTT), and 271-274 (DTAG) each bind GTP. Residue S231 coordinates Mg(2+). K(+) is bound by residues T246, I248, and T251. Mg(2+) is bound at residue T252. K452 contacts (6S)-5-formyl-5,6,7,8-tetrahydrofolate.

The protein belongs to the TRAFAC class TrmE-Era-EngA-EngB-Septin-like GTPase superfamily. TrmE GTPase family. As to quaternary structure, homodimer. Heterotetramer of two MnmE and two MnmG subunits. K(+) is required as a cofactor.

The protein localises to the cytoplasm. Exhibits a very high intrinsic GTPase hydrolysis rate. Involved in the addition of a carboxymethylaminomethyl (cmnm) group at the wobble position (U34) of certain tRNAs, forming tRNA-cmnm(5)s(2)U34. This Mesoplasma florum (strain ATCC 33453 / NBRC 100688 / NCTC 11704 / L1) (Acholeplasma florum) protein is tRNA modification GTPase MnmE.